Reading from the N-terminus, the 682-residue chain is MSRKQLALFEPTLVVQALKEAVKKLNPQAQWRNPVMFIVWIGSLLTTCISIAMASGAMPGNALFSVAISGWLWVTVLFANFAEALAEGRSKAQANSLKGVKKTAFARKLREPKYGAAADKVPADQLRKGDIVLVEAGDIIPCDGEVIEGGASVDESAITGESAPVIRESGGDFASVTGGTRILSDWLVIECSVNPGETFLDRMIAMVEGAQRRKTPNEIALTILLIALTIVFLLATATLWPFSAWGGNAVSVTVLVALLVCLIPTTIGGLLSAIGVAGMSRMLGANVVATSGRAVEAAGDVDVLLLDKTGTITLGNRQASEFIPAQGVDEKTLADAAQLASLADETPEGRSIVILAKQRFNLRERDVQSLHATFVPFTAQSRMSGINIDNRMIRKGSVDAIRRHVEANGGHFPADVDQKVDQVARQGATPLVVVEGSRVLGVIALKDIVKGGIKERFAQLRKMGIKTVMITGDNRLTAAAIAAEAGVDDFLAEATPEAKLALIRQYQAEGRLVAMTGDGTNDAPALAQADVAVAMNSGTQAAKEAGNMVDLDSNPTKLIEVVHIGKQMLMTRGSLTTFSIANDVAKYFAIIPAAFAVTYPQLNALNIMRLHSPDSAILSAVIFNALIIVFLIPLALKGVSYKPLTASAMLRRNLWIYGLGGLLVPFIGIKVIDLLLTVCGLV.

The next 4 membrane-spanning stretches (helical) occupy residues 34–54 (PVMF…IAMA), 62–82 (ALFS…ANFA), 219–239 (IALT…TATL), and 254–274 (VLVA…LSAI). Asp-307 (4-aspartylphosphate intermediate) is an active-site residue. ATP-binding positions include Asp-344, Glu-348, 377–384 (FTAQSRMS), and Lys-395. Positions 518 and 522 each coordinate Mg(2+). Transmembrane regions (helical) follow at residues 588-608 (FAII…LNIM), 616-636 (AILS…PLAL), and 656-676 (IYGL…DLLL).

The protein belongs to the cation transport ATPase (P-type) (TC 3.A.3) family. Type IA subfamily. The system is composed of three essential subunits: KdpA, KdpB and KdpC.

The protein localises to the cell inner membrane. The catalysed reaction is K(+)(out) + ATP + H2O = K(+)(in) + ADP + phosphate + H(+). Part of the high-affinity ATP-driven potassium transport (or Kdp) system, which catalyzes the hydrolysis of ATP coupled with the electrogenic transport of potassium into the cytoplasm. This subunit is responsible for energy coupling to the transport system and for the release of the potassium ions to the cytoplasm. This is Potassium-transporting ATPase ATP-binding subunit from Escherichia coli O157:H7 (strain EC4115 / EHEC).